We begin with the raw amino-acid sequence, 472 residues long: Platelet glycoprotein 4 (472 aa).

Residues 1 to 7 are Cytoplasmic-facing; sequence MGCDRNC. Residues C3 and C7 are each lipidated (S-palmitoyl cysteine). A helical membrane pass occupies residues 8 to 29; the sequence is GLIAGAVIGAVLAVFGGILMPV. Over 30 to 439 the chain is Extracellular; sequence GDMLVEKTIK…FRNQVTGKVK (410 aa). N-linked (GlcNAc...) asparagine glycans are attached at residues N79, N102, N132, N205, N235, N247, N321, and N417. The required for interaction with thrombospondins, THBS1 and THBS2 stretch occupies residues 93 to 120; sequence YRVRYLAKENITQDPVDSTVSFVQPNGA. 3 disulfide bridges follow: C243–C311, C272–C333, and C313–C322. The helical transmembrane segment at 440-461 threads the bilayer; the sequence is LLGLVEMVLLGLGVVMFVAFMI. Residues 460 to 472 form an interaction with PTK2, PXN and LYN region; sequence MISYCACRSKNRK. The Cytoplasmic segment spans residues 462-472; sequence SYCACRSKNRK. Residues C464 and C466 are each lipidated (S-palmitoyl cysteine). Glycyl lysine isopeptide (Lys-Gly) (interchain with G-Cter in ubiquitin) cross-links involve residues K469 and K472.

Belongs to the CD36 family. Interacts with THBS1 and THBS2; the interactions mediate the THBS antiangiogenic activity. Upon interaction with a ligand, such as oxidized low-density lipoprotein (oxLDL) or amyloid-beta 42, rapidly forms a complex with TLR4 and TLR6; the complex is internalized and triggers an inflammatory signal. Through its C-terminus, interacts with PTK2, PXN and LYN, but not with SRC. LYN kinase activity is required for facilitating TLR4:TLR6 heterodimerization and signal initiation. Upon interaction with ligands such as diacylated lipopeptides, interacts with the TLR2:TLR6 heterodimer. Interacts with CD9, CD81, FCER1G, ITGB2 and/or ITGB2; forming a membrane heteromeric complex required for the internalization of CD36 and its ligands. Interacts (when palmitoylated) with ARF6; this interaction mediates CD36 transport to the plasma membrane. In terms of processing, palmitoylated by ZDHHC5. Palmitoylation is required for proper localization at the plasma membrane. Ubiquitinated at Lys-469 and Lys-472. Ubiquitination is induced by fatty acids such as oleic acid and leads to degradation by the proteasome. Ubiquitination and degradation are inhibited by insulin which blocks the effect of fatty acids.

It localises to the cell membrane. The protein resides in the membrane raft. The protein localises to the golgi apparatus. It is found in the apical cell membrane. It catalyses the reaction butanoate(out) = butanoate(in). The enzyme catalyses (9Z)-octadecenoate(out) = (9Z)-octadecenoate(in). It carries out the reaction (9Z,12Z)-octadecadienoate(out) = (9Z,12Z)-octadecadienoate(in). The catalysed reaction is tetradecanoate(out) = tetradecanoate(in). It catalyses the reaction hexadecanoate(out) = hexadecanoate(in). The enzyme catalyses tetracosanoate(out) = tetracosanoate(in). In terms of biological role, multifunctional glycoprotein that acts as a receptor for a broad range of ligands. Ligands can be of proteinaceous nature like thrombospondin, fibronectin, collagen or amyloid-beta as well as of lipidic nature such as oxidized low-density lipoprotein (oxLDL), anionic phospholipids, long-chain fatty acids and bacterial diacylated lipopeptides. They are generally multivalent and can therefore engage multiple receptors simultaneously, the resulting formation of CD36 clusters initiates signal transduction and internalization of receptor-ligand complexes. The dependency on coreceptor signaling is strongly ligand specific. Cellular responses to these ligands are involved in angiogenesis, inflammatory response, fatty acid metabolism, taste and dietary fat processing in the intestine. Binds long-chain fatty acids and facilitates their transport into cells, thus participating in muscle lipid utilization, adipose energy storage, and gut fat absorption. Mechanistically, binding of fatty acids activates downstream kinase LYN, which phosphorylates the palmitoyltransferase ZDHHC5 and inactivates it, resulting in the subsequent depalmitoylation of CD36 and caveolar endocytosis. In the small intestine, plays a role in proximal absorption of dietary fatty acid and cholesterol for optimal chylomicron formation, possibly through the activation of MAPK1/3 (ERK1/2) signaling pathway. Involved in oral fat perception and preferences. Detection into the tongue of long-chain fatty acids leads to a rapid and sustained rise in flux and protein content of pancreatobiliary secretions. In taste receptor cells, mediates the induction of an increase in intracellular calcium levels by long-chain fatty acids, leading to the activation of the gustatory neurons in the nucleus of the solitary tract. Important factor in both ventromedial hypothalamus neuronal sensing of long-chain fatty acid and the regulation of energy and glucose homeostasis. Receptor for thrombospondins, THBS1 and THBS2, mediating their antiangiogenic effects. As a coreceptor for TLR4:TLR6 heterodimer, promotes inflammation in monocytes/macrophages. Upon ligand binding, such as oxLDL or amyloid-beta 42, interacts with the heterodimer TLR4:TLR6, the complex is internalized and triggers inflammatory response, leading to NF-kappa-B-dependent production of CXCL1, CXCL2 and CCL9 cytokines, via MYD88 signaling pathway, and CCL5 cytokine, via TICAM1 signaling pathway, as well as IL1B secretion, through the priming and activation of the NLRP3 inflammasome. Selective and nonredundant sensor of microbial diacylated lipopeptide that signal via TLR2:TLR6 heterodimer, this cluster triggers signaling from the cell surface, leading to the NF-kappa-B-dependent production of TNF, via MYD88 signaling pathway and subsequently is targeted to the Golgi in a lipid-raft dependent pathway. The chain is Platelet glycoprotein 4 (CD36) from Mesocricetus auratus (Golden hamster).